Consider the following 266-residue polypeptide: 4-hydroxy-tetrahydrodipicolinate reductase (266 aa).

10–15 contributes to the NAD(+) binding site; it reads GPRGRM. Residue Lys38 coordinates NADP(+). NAD(+) contacts are provided by residues 99 to 101 and 125 to 128; these read GTT and APNF. His155 serves as the catalytic Proton donor/acceptor. Residue His156 participates in (S)-2,3,4,5-tetrahydrodipicolinate binding. Lys159 acts as the Proton donor in catalysis. 165-166 is a binding site for (S)-2,3,4,5-tetrahydrodipicolinate; sequence GT.

Belongs to the DapB family.

It localises to the cytoplasm. The enzyme catalyses (S)-2,3,4,5-tetrahydrodipicolinate + NAD(+) + H2O = (2S,4S)-4-hydroxy-2,3,4,5-tetrahydrodipicolinate + NADH + H(+). It catalyses the reaction (S)-2,3,4,5-tetrahydrodipicolinate + NADP(+) + H2O = (2S,4S)-4-hydroxy-2,3,4,5-tetrahydrodipicolinate + NADPH + H(+). The protein operates within amino-acid biosynthesis; L-lysine biosynthesis via DAP pathway; (S)-tetrahydrodipicolinate from L-aspartate: step 4/4. Catalyzes the conversion of 4-hydroxy-tetrahydrodipicolinate (HTPA) to tetrahydrodipicolinate. This chain is 4-hydroxy-tetrahydrodipicolinate reductase, found in Bacillus cereus (strain B4264).